A 286-amino-acid chain; its full sequence is 33 kDa chaperonin (286 aa).

Cystine bridges form between cysteine 233–cysteine 235 and cysteine 267–cysteine 270.

The protein belongs to the HSP33 family. In terms of processing, under oxidizing conditions two disulfide bonds are formed involving the reactive cysteines. Under reducing conditions zinc is bound to the reactive cysteines and the protein is inactive.

The protein localises to the cytoplasm. Its function is as follows. Redox regulated molecular chaperone. Protects both thermally unfolding and oxidatively damaged proteins from irreversible aggregation. Plays an important role in the bacterial defense system toward oxidative stress. This is 33 kDa chaperonin from Histophilus somni (strain 129Pt) (Haemophilus somnus).